The sequence spans 49 residues: L-amino-acid oxidase (49 aa).

43–44 (MS) is a binding site for FAD.

It belongs to the flavin monoamine oxidase family. FIG1 subfamily. Homodimer; non-covalently linked. Requires FAD as cofactor. N-glycosylated. In terms of tissue distribution, expressed by the venom gland.

It is found in the secreted. The enzyme catalyses an L-alpha-amino acid + O2 + H2O = a 2-oxocarboxylate + H2O2 + NH4(+). The catalysed reaction is L-leucine + O2 + H2O = 4-methyl-2-oxopentanoate + H2O2 + NH4(+). Its function is as follows. Catalyzes an oxidative deamination of predominantly hydrophobic and aromatic L-amino acids, thus producing hydrogen peroxide that may contribute to the diverse toxic effects of this enzyme. Shows activity on L-Leu. Exhibits diverse biological activities, such as hemorrhage, hemolysis, edema, antibacterial and antiparasitic activities, as well as regulation of platelet aggregation. Its effect on platelets is controversial, since it either induces aggregation or inhibits agonist-induced aggregation. These different effects are probably due to different experimental conditions. In addition, this protein induces apoptosis and necrosis and has inhibitory effects on rat kidney function (decrease of blood flow and glomerular filtration). The chain is L-amino-acid oxidase from Bothrops insularis (Golden lancehead).